A 350-amino-acid chain; its full sequence is uncharacterized protein (350 aa).

The region spanning 164–327 (NDPLPGYVEV…EKTRIGARVV (164 aa)) is the Integrase catalytic domain.

This is an uncharacterized protein from Sinorhizobium fredii (strain NBRC 101917 / NGR234).